Consider the following 276-residue polypeptide: Thiazole synthase (276 aa).

Lys-117 functions as the Schiff-base intermediate with DXP in the catalytic mechanism. 1-deoxy-D-xylulose 5-phosphate contacts are provided by residues Gly-178, Ala-204–Gly-205, and Asn-226–Thr-227.

It belongs to the ThiG family. In terms of assembly, homotetramer. Forms heterodimers with either ThiH or ThiS.

It is found in the plastid. Its subcellular location is the chloroplast. The catalysed reaction is [ThiS sulfur-carrier protein]-C-terminal-Gly-aminoethanethioate + 2-iminoacetate + 1-deoxy-D-xylulose 5-phosphate = [ThiS sulfur-carrier protein]-C-terminal Gly-Gly + 2-[(2R,5Z)-2-carboxy-4-methylthiazol-5(2H)-ylidene]ethyl phosphate + 2 H2O + H(+). Its pathway is cofactor biosynthesis; thiamine diphosphate biosynthesis. Its function is as follows. Catalyzes the rearrangement of 1-deoxy-D-xylulose 5-phosphate (DXP) to produce the thiazole phosphate moiety of thiamine. Sulfur is provided by the thiocarboxylate moiety of the carrier protein ThiS. In vitro, sulfur can be provided by H(2)S. This is Thiazole synthase from Gracilaria tenuistipitata var. liui (Red alga).